The primary structure comprises 273 residues: Dermonecrotic toxin LspaSicTox-alphaIA2iii (273 aa).

Residue His5 is part of the active site. Mg(2+) contacts are provided by Glu25 and Asp27. Catalysis depends on His41, which acts as the Nucleophile. Intrachain disulfides connect Cys45–Cys51 and Cys47–Cys190. Asp85 serves as a coordination point for Mg(2+).

It belongs to the arthropod phospholipase D family. Class II subfamily. Mg(2+) is required as a cofactor. As to expression, expressed by the venom gland.

The protein resides in the secreted. It carries out the reaction an N-(acyl)-sphingosylphosphocholine = an N-(acyl)-sphingosyl-1,3-cyclic phosphate + choline. The enzyme catalyses an N-(acyl)-sphingosylphosphoethanolamine = an N-(acyl)-sphingosyl-1,3-cyclic phosphate + ethanolamine. The catalysed reaction is a 1-acyl-sn-glycero-3-phosphocholine = a 1-acyl-sn-glycero-2,3-cyclic phosphate + choline. It catalyses the reaction a 1-acyl-sn-glycero-3-phosphoethanolamine = a 1-acyl-sn-glycero-2,3-cyclic phosphate + ethanolamine. Dermonecrotic toxins cleave the phosphodiester linkage between the phosphate and headgroup of certain phospholipids (sphingolipid and lysolipid substrates), forming an alcohol (often choline) and a cyclic phosphate. This toxin acts on sphingomyelin (SM). It may also act on ceramide phosphoethanolamine (CPE), lysophosphatidylcholine (LPC) and lysophosphatidylethanolamine (LPE), but not on lysophosphatidylserine (LPS), and lysophosphatidylglycerol (LPG). It acts by transphosphatidylation, releasing exclusively cyclic phosphate products as second products. Induces dermonecrosis, hemolysis, increased vascular permeability, edema, inflammatory response, and platelet aggregation. The protein is Dermonecrotic toxin LspaSicTox-alphaIA2iii of Loxosceles spadicea (Recluse spider).